A 288-amino-acid chain; its full sequence is Bifunctional protein FolD (288 aa).

An NADP(+)-binding site is contributed by Gly166–Ser168.

The protein belongs to the tetrahydrofolate dehydrogenase/cyclohydrolase family. As to quaternary structure, homodimer.

The enzyme catalyses (6R)-5,10-methylene-5,6,7,8-tetrahydrofolate + NADP(+) = (6R)-5,10-methenyltetrahydrofolate + NADPH. It catalyses the reaction (6R)-5,10-methenyltetrahydrofolate + H2O = (6R)-10-formyltetrahydrofolate + H(+). It functions in the pathway one-carbon metabolism; tetrahydrofolate interconversion. Functionally, catalyzes the oxidation of 5,10-methylenetetrahydrofolate to 5,10-methenyltetrahydrofolate and then the hydrolysis of 5,10-methenyltetrahydrofolate to 10-formyltetrahydrofolate. This chain is Bifunctional protein FolD, found in Levilactobacillus brevis (strain ATCC 367 / BCRC 12310 / CIP 105137 / JCM 1170 / LMG 11437 / NCIMB 947 / NCTC 947) (Lactobacillus brevis).